The primary structure comprises 125 residues: Fumarate reductase subunit D (125 aa).

The next 3 helical transmembrane spans lie at 29 to 49, 64 to 84, and 102 to 122; these read VTAL…PLGW, NPIT…HAAH, and VIAL…GWML.

The protein belongs to the FrdD family. Part of an enzyme complex containing four subunits: a flavoprotein (FrdA), an iron-sulfur protein (FrdB), and two hydrophobic anchor proteins (FrdC and FrdD).

The protein resides in the cell membrane. Functionally, anchors the catalytic components of the fumarate reductase complex to the cell membrane, binds quinones. This is Fumarate reductase subunit D from Mycobacterium bovis (strain BCG / Tokyo 172 / ATCC 35737 / TMC 1019).